The chain runs to 191 residues: MKKSLLGLTFASLMFSAGSAVAADYKIDKEGQHAFVNFRIQHLGYSWLYGTFKDFDGTFTFDEKNPAADKVNVTINTTSVDTNHAERDKHLRSADFLNTAKYPQATFTSTSVKKDGDELDITGDLTLNGVTKPVTLEAKLIGQGDDPWGGKRAGFEAEGKIKLKDFNIKTDLGPASQEVDLIISVEGVQQK.

The N-terminal stretch at 1-22 is a signal peptide; sequence MKKSLLGLTFASLMFSAGSAVA.

Belongs to the UPF0312 family. Type 1 subfamily.

The protein resides in the periplasm. In Shigella boydii serotype 4 (strain Sb227), this protein is Protein YceI.